The following is a 234-amino-acid chain: Sperm-associated microtubule inner protein 5 (234 aa).

In terms of assembly, microtubule inner protein component of sperm flagellar doublet microtubules. In terms of tissue distribution, expressed in testis (at protein level). Strongly expressed in peritubular cells and Leydig cells and weakly expressed in the cytoplasm of spermatocytes.

Its subcellular location is the cytoplasm. The protein localises to the cytoskeleton. The protein resides in the flagellum axoneme. It is found in the nucleus. Its function is as follows. Microtubule inner protein (MIP) part of the dynein-decorated doublet microtubules (DMTs) in flagellum axoneme. May serve to reinforce and thus stabilize the microtubule structure in the sperm flagella. The polypeptide is Sperm-associated microtubule inner protein 5 (Homo sapiens (Human)).